We begin with the raw amino-acid sequence, 131 residues long: Ribonuclease P protein component (131 aa).

It belongs to the RnpA family. Consists of a catalytic RNA component (M1 or rnpB) and a protein subunit.

It catalyses the reaction Endonucleolytic cleavage of RNA, removing 5'-extranucleotides from tRNA precursor.. RNaseP catalyzes the removal of the 5'-leader sequence from pre-tRNA to produce the mature 5'-terminus. It can also cleave other RNA substrates such as 4.5S RNA. The protein component plays an auxiliary but essential role in vivo by binding to the 5'-leader sequence and broadening the substrate specificity of the ribozyme. The sequence is that of Ribonuclease P protein component from Acinetobacter baylyi (strain ATCC 33305 / BD413 / ADP1).